A 95-amino-acid polypeptide reads, in one-letter code: Cell division topological specificity factor (95 aa).

Belongs to the MinE family.

In terms of biological role, prevents the cell division inhibition by proteins MinC and MinD at internal division sites while permitting inhibition at polar sites. This ensures cell division at the proper site by restricting the formation of a division septum at the midpoint of the long axis of the cell. The polypeptide is Cell division topological specificity factor (Methylorubrum extorquens (strain PA1) (Methylobacterium extorquens)).